The chain runs to 619 residues: Glucokinase regulatory protein (619 aa).

2 SIS domains span residues V90–N283 and T319–K498. Keto-D-fructose 6-phosphate is bound at residue C107–T109. Beta-D-fructose 1-phosphate contacts are provided by residues T109–S110, E153, S179–G181, and E347. Residues S179–S183 and E347 contribute to the keto-D-fructose 6-phosphate site. Residues I462–F464 are essential for interaction with GCK. K513 provides a ligand contact to keto-D-fructose 6-phosphate. K513 lines the beta-D-fructose 1-phosphate pocket.

The protein belongs to the GCKR family. Interacts (fructose 6-phosphate bound form) with gck.

It localises to the nucleus. Its subcellular location is the cytoplasm. It is found in the mitochondrion. Regulates glucokinase (gck) by forming an inactive complex with this enzyme. The affinity of gckr for gck is modulated by fructose metabolites: gckr with bound fructose 6-phosphate has increased affinity for gck, while gckr with bound fructose 1-phosphate has strongly decreased affinity for gck and does not inhibit gck activity. The chain is Glucokinase regulatory protein from Xenopus laevis (African clawed frog).